The following is a 254-amino-acid chain: 5'-nucleotidase SurE (254 aa).

A divalent metal cation is bound by residues Asp8, Asp9, Ser40, and Asn93.

This sequence belongs to the SurE nucleotidase family. Requires a divalent metal cation as cofactor.

The protein resides in the cytoplasm. It carries out the reaction a ribonucleoside 5'-phosphate + H2O = a ribonucleoside + phosphate. In terms of biological role, nucleotidase that shows phosphatase activity on nucleoside 5'-monophosphates. The protein is 5'-nucleotidase SurE of Methylorubrum extorquens (strain CM4 / NCIMB 13688) (Methylobacterium extorquens).